The chain runs to 621 residues: Chaperone protein HscA homolog (621 aa).

It belongs to the heat shock protein 70 family.

Chaperone involved in the maturation of iron-sulfur cluster-containing proteins. Has a low intrinsic ATPase activity which is markedly stimulated by HscB. This is Chaperone protein HscA homolog from Cupriavidus necator (strain ATCC 17699 / DSM 428 / KCTC 22496 / NCIMB 10442 / H16 / Stanier 337) (Ralstonia eutropha).